The chain runs to 156 residues: MSINATLFVQAIVFLILVLFTMKFVWPPIAKALDERALKIADGLAAADKAKTDLAAANKRVEQELAQTRNETASRLADAERRAQAIIEEAKARASEEGNKIVAAARAEAEQQTVQAREALREQVAALAVKGAEQILRKEVDAGVHADLLNRLKTEL.

The helical transmembrane segment at Leu-7 to Pro-27 threads the bilayer.

This sequence belongs to the ATPase B chain family. F-type ATPases have 2 components, F(1) - the catalytic core - and F(0) - the membrane proton channel. F(1) has five subunits: alpha(3), beta(3), gamma(1), delta(1), epsilon(1). F(0) has three main subunits: a(1), b(2) and c(10-14). The alpha and beta chains form an alternating ring which encloses part of the gamma chain. F(1) is attached to F(0) by a central stalk formed by the gamma and epsilon chains, while a peripheral stalk is formed by the delta and b chains.

The protein resides in the cell inner membrane. F(1)F(0) ATP synthase produces ATP from ADP in the presence of a proton or sodium gradient. F-type ATPases consist of two structural domains, F(1) containing the extramembraneous catalytic core and F(0) containing the membrane proton channel, linked together by a central stalk and a peripheral stalk. During catalysis, ATP synthesis in the catalytic domain of F(1) is coupled via a rotary mechanism of the central stalk subunits to proton translocation. In terms of biological role, component of the F(0) channel, it forms part of the peripheral stalk, linking F(1) to F(0). In Delftia acidovorans (strain DSM 14801 / SPH-1), this protein is ATP synthase subunit b.